Consider the following 27-residue polypeptide: Endoglucanase gh5 (27 aa).

Residue glutamate 6 is the Nucleophile of the active site.

The catalysed reaction is Endohydrolysis of (1-&gt;4)-beta-D-glucosidic linkages in cellulose, lichenin and cereal beta-D-glucans.. With respect to regulation, activity is stimulated by zinc ions, potassium ions and DTT. Activity is inhibited by manganese and chloride ions. Endoglucanase (EG) that cleaves the internal beta-1,4-glucosidic bonds in cellulose. The protein is Endoglucanase gh5 of Fomes meliae (Fomitopsis meliae).